Consider the following 596-residue polypeptide: ATP-binding protein Uup (596 aa).

2 ABC transporter domains span residues 1–222 and 290–516; these read MSLI…RIEK and FKLD…SKIN. ATP contacts are provided by residues 36 to 43 and 322 to 329; these read GKNGAGKS and GDNGCGKS. Positions 519-596 are C-terminal domain (CTD), binds DNA; it reads IKIKNNFKKE…LEKNIINTKI (78 aa).

The protein belongs to the ABC transporter superfamily. ABCF family. Uup subfamily.

The protein resides in the cytoplasm. The catalysed reaction is ATP + H2O = ADP + phosphate + H(+). In terms of biological role, probably plays a role in ribosome assembly or function. May be involved in resolution of branched DNA intermediates that result from template switching in postreplication gaps. Binds DNA and has ATPase activity. In Buchnera aphidicola subsp. Acyrthosiphon pisum (strain APS) (Acyrthosiphon pisum symbiotic bacterium), this protein is ATP-binding protein Uup.